Consider the following 288-residue polypeptide: Aminoglycoside N(3)-acetyltransferase VII (288 aa).

This sequence belongs to the antibiotic N-acetyltransferase family.

The enzyme catalyses a 2-deoxystreptamine antibiotic + acetyl-CoA = an N(3)-acetyl-2-deoxystreptamine antibiotic + CoA + H(+). In terms of biological role, resistance to paromomycin. The sequence is that of Aminoglycoside N(3)-acetyltransferase VII (aacC7) from Streptomyces paromomycinus (Streptomyces rimosus subsp. paromomycinus).